A 416-amino-acid chain; its full sequence is Transmembrane protease serine 11B-like protein (416 aa).

Residues 1 to 15 (MYRPVIASRKSIPPW) are Cytoplasmic-facing. A helical; Signal-anchor for type II membrane protein membrane pass occupies residues 16-36 (LIILCVLGVLAALGIIIGLLV). The Extracellular portion of the chain corresponds to 37-416 (HFLAVENKIY…RNWIASKTGI (380 aa)). The SEA domain occupies 44–161 (KIYYYQGGFK…GSLKLTEISK (118 aa)). N-linked (GlcNAc...) asparagine glycosylation occurs at Asn-107. In terms of domain architecture, Peptidase S1 spans 185–415 (ITGGSTAHKG…YRNWIASKTG (231 aa)). An intrachain disulfide couples Cys-210 to Cys-226. His-225 acts as the Charge relay system in catalysis. N-linked (GlcNAc...) asparagine glycosylation occurs at Asn-235. The active-site Charge relay system is the Asp-270. Intrachain disulfides connect Cys-335–Cys-351 and Cys-362–Cys-391. Ser-366 functions as the Charge relay system in the catalytic mechanism.

Belongs to the peptidase S1 family. In terms of tissue distribution, expressed in esophagus, cervix, tongue, and testes.

The protein localises to the cell membrane. Inhibited by aprotinin, leupeptin, benzamidine, SERPINA1, SPINT1 and SPINT2. Its function is as follows. Serine protease. The protein is Transmembrane protease serine 11B-like protein (Tmprss11b) of Mus musculus (Mouse).